Reading from the N-terminus, the 96-residue chain is Aspartyl/glutamyl-tRNA(Asn/Gln) amidotransferase subunit C (96 aa).

Residues 64–96 (REDEPEPGLPREEVLKNAPDQQDGQFRVPAILE) are disordered.

This sequence belongs to the GatC family. As to quaternary structure, heterotrimer of A, B and C subunits.

It catalyses the reaction L-glutamyl-tRNA(Gln) + L-glutamine + ATP + H2O = L-glutaminyl-tRNA(Gln) + L-glutamate + ADP + phosphate + H(+). The enzyme catalyses L-aspartyl-tRNA(Asn) + L-glutamine + ATP + H2O = L-asparaginyl-tRNA(Asn) + L-glutamate + ADP + phosphate + 2 H(+). In terms of biological role, allows the formation of correctly charged Asn-tRNA(Asn) or Gln-tRNA(Gln) through the transamidation of misacylated Asp-tRNA(Asn) or Glu-tRNA(Gln) in organisms which lack either or both of asparaginyl-tRNA or glutaminyl-tRNA synthetases. The reaction takes place in the presence of glutamine and ATP through an activated phospho-Asp-tRNA(Asn) or phospho-Glu-tRNA(Gln). The sequence is that of Aspartyl/glutamyl-tRNA(Asn/Gln) amidotransferase subunit C from Geobacillus thermodenitrificans (strain NG80-2).